The primary structure comprises 283 residues: NFU1 iron-sulfur cluster scaffold homolog, mitochondrial (283 aa).

Residues 1–30 (MSKFLSQAALNTLRNTRLGSRQLVRSFAGI) constitute a mitochondrion transit peptide. Residues 182 to 250 (IKELLDTRIR…IPEVESVEQV (69 aa)) form a nifU region. Residues Cys219 and Cys222 each coordinate [4Fe-4S] cluster.

Belongs to the NifU family.

The protein resides in the mitochondrion. Molecular scaffold for [Fe-S] cluster assembly of mitochondrial iron-sulfur proteins. The protein is NFU1 iron-sulfur cluster scaffold homolog, mitochondrial of Drosophila yakuba (Fruit fly).